Reading from the N-terminus, the 567-residue chain is MFS-type transporter poxA (567 aa).

Basic and acidic residues predominate over residues 1–23; it reads MPASDRTSETGDVEKVTAAETPK. A disordered region spans residues 1-24; that stretch reads MPASDRTSETGDVEKVTAAETPKE. Transmembrane regions (helical) follow at residues 35-55, 77-97, 108-128, 141-161, 165-185, 197-217, 240-260, 271-291, 311-331, and 349-369; these read ALTGLPLYTVLVGLGLALFLG, ADIGWYGAAYPLTMSSIQLLA, LVFLVFFGLFMLGSLLCGVAV, GAGAAGVLSGTLAIVSAVVPL, SLILGLMMSLVGTAVVLGPVI, WCFYLNLPCGGVTLLALILFF, LAGCLGFIPAVVMLLLALQWG, SATIIGLFCGAGVSLILFLIW, IIASCLYGFALLGGYVVVGYF, and VMLLPNVITNFISKAVIGVIV. Asn370 carries an N-linked (GlcNAc...) asparagine glycan. A run of 4 helical transmembrane segments spans residues 372 to 392, 410 to 430, 436 to 456, and 515 to 535; these read TGYFNPWLFFGAAVLAIGSGL, ILQGAALGIIQAPTLGVQVAL, LIPVALSLVIFFQYFGSSIML, and AIAGVMWLSTAAALFGFLVSF. A disordered region spans residues 547–567; that stretch reads EENKKEAAEEEEEVKVAAVEA.

This sequence belongs to the major facilitator superfamily. TCR/Tet family.

The protein localises to the cell membrane. In terms of biological role, MFS-type transporter; part of the gene cluster that mediates the biosynthesis of oxaleimides, cytotoxic compounds containing an unusual disubstituted succinimide moiety. This is MFS-type transporter poxA from Penicillium oxalicum (strain 114-2 / CGMCC 5302) (Penicillium decumbens).